The chain runs to 173 residues: Protein tyrosine phosphatase type IVA 1 (173 aa).

The Tyrosine-protein phosphatase domain occupies 8 to 161 (APVEVTYKNM…YRPKMRLRFK (154 aa)). A disulfide bridge connects residues Cys49 and Cys104. Catalysis depends on Asp72, which acts as the Proton donor. The interval 97–132 (GCCIAVHCVAGLGRAPVLVALALIEGGMKYEDAVQF) is interaction with ATF5. The active-site Phosphocysteine intermediate is Cys104. 105–110 (VAGLGR) provides a ligand contact to phosphate. Residue Arg110 coordinates substrate. Cys170 bears the Cysteine methyl ester mark. The S-farnesyl cysteine moiety is linked to residue Cys170. Residues 171–173 (CIQ) constitute a propeptide, removed in mature form.

It belongs to the protein-tyrosine phosphatase family. In terms of assembly, homotrimer. Interacts with ATF5. Interacts with tubulin. In terms of processing, farnesylated. Farnesylation is required for membrane targeting. Unfarnesylated forms are shifted into the nucleus. In terms of tissue distribution, expressed in bone marrow, lymph nodes, T lymphocytes, spleen, thymus and tonsil. Overexpressed in tumor cell lines.

Its subcellular location is the cell membrane. It localises to the early endosome. The protein localises to the endoplasmic reticulum. It is found in the cytoplasm. The protein resides in the cytoskeleton. Its subcellular location is the spindle. It localises to the nucleus. It carries out the reaction O-phospho-L-tyrosyl-[protein] + H2O = L-tyrosyl-[protein] + phosphate. Its activity is regulated as follows. Inhibited by sodium orthovanadate and pentamidine. Its function is as follows. Protein tyrosine phosphatase which stimulates progression from G1 into S phase during mitosis. May play a role in the development and maintenance of differentiating epithelial tissues. Enhances cell proliferation, cell motility and invasive activity, and promotes cancer metastasis. This Homo sapiens (Human) protein is Protein tyrosine phosphatase type IVA 1 (PTP4A1).